We begin with the raw amino-acid sequence, 463 residues long: UDP-N-acetylmuramoylalanine--D-glutamate ligase (463 aa).

116–122 lines the ATP pocket; that stretch reads GTNGKTT.

This sequence belongs to the MurCDEF family.

The protein localises to the cytoplasm. The catalysed reaction is UDP-N-acetyl-alpha-D-muramoyl-L-alanine + D-glutamate + ATP = UDP-N-acetyl-alpha-D-muramoyl-L-alanyl-D-glutamate + ADP + phosphate + H(+). The protein operates within cell wall biogenesis; peptidoglycan biosynthesis. In terms of biological role, cell wall formation. Catalyzes the addition of glutamate to the nucleotide precursor UDP-N-acetylmuramoyl-L-alanine (UMA). This chain is UDP-N-acetylmuramoylalanine--D-glutamate ligase, found in Synechococcus elongatus (strain ATCC 33912 / PCC 7942 / FACHB-805) (Anacystis nidulans R2).